We begin with the raw amino-acid sequence, 134 residues long: MPTINQLVKHGREKVKEKSKSPALQGHPQKRGVCVRVSTMTPKKPNSALRKIAKVRLSNGIEVTAYIPGIGHNLQEHSIVLVRGGRVKDLPGVRYKIIRGALDAAGVENRRQSRSKYGAKRPKAGAAAGAKGKK.

Residues 1–30 form a disordered region; sequence MPTINQLVKHGREKVKEKSKSPALQGHPQK. Position 89 is a 3-methylthioaspartic acid (aspartate 89). The interval 106–134 is disordered; that stretch reads GVENRRQSRSKYGAKRPKAGAAAGAKGKK. Residues 112–123 are compositionally biased toward basic residues; the sequence is QSRSKYGAKRPK. Positions 124 to 134 are enriched in low complexity; it reads AGAAAGAKGKK.

This sequence belongs to the universal ribosomal protein uS12 family. Part of the 30S ribosomal subunit. Contacts proteins S8 and S17. May interact with IF1 in the 30S initiation complex.

In terms of biological role, with S4 and S5 plays an important role in translational accuracy. Functionally, interacts with and stabilizes bases of the 16S rRNA that are involved in tRNA selection in the A site and with the mRNA backbone. Located at the interface of the 30S and 50S subunits, it traverses the body of the 30S subunit contacting proteins on the other side and probably holding the rRNA structure together. The combined cluster of proteins S8, S12 and S17 appears to hold together the shoulder and platform of the 30S subunit. This chain is Small ribosomal subunit protein uS12, found in Fervidobacterium nodosum (strain ATCC 35602 / DSM 5306 / Rt17-B1).